Consider the following 267-residue polypeptide: uncharacterized protein (267 aa).

Residues S210 and S224 each carry the phosphoserine modification.

In terms of tissue distribution, testis. Down-regulated in men with spermatocyte arrest.

Functionally, essential for normal spermatogenesis and male fertility. This is an uncharacterized protein from Homo sapiens (Human).